A 350-amino-acid chain; its full sequence is C4-dicarboxylate-binding protein DctB (350 aa).

A signal peptide spans 1–18; sequence MKSLLACLALMIAGIATA.

It belongs to the bacterial solute-binding protein 7 family.

It is found in the secreted. In terms of biological role, part of the binding-protein-dependent transport system for uptake of C4-dicarboxylates. Responsible for growth on fumarate and succinate but not malate. Is not directly involved in C4-dicarboxylate uptake, but plays a sensory role in the DctS/DctR two-component system which regulates the expression of the dctA C4-dicarboxylate transporter. In Bacillus subtilis (strain 168), this protein is C4-dicarboxylate-binding protein DctB (dctB).